Consider the following 312-residue polypeptide: Homoserine O-acetyltransferase (312 aa).

Residue cysteine 142 is the Acyl-thioester intermediate of the active site. Residues lysine 163 and serine 192 each coordinate substrate. The Proton acceptor role is filled by histidine 235. Glutamate 237 is an active-site residue. Arginine 249 serves as a coordination point for substrate.

Belongs to the MetA family.

It is found in the cytoplasm. It catalyses the reaction L-homoserine + acetyl-CoA = O-acetyl-L-homoserine + CoA. It participates in amino-acid biosynthesis; L-methionine biosynthesis via de novo pathway; O-acetyl-L-homoserine from L-homoserine: step 1/1. Transfers an acetyl group from acetyl-CoA to L-homoserine, forming acetyl-L-homoserine. In Ruegeria pomeroyi (strain ATCC 700808 / DSM 15171 / DSS-3) (Silicibacter pomeroyi), this protein is Homoserine O-acetyltransferase.